Consider the following 545-residue polypeptide: Chaperonin GroEL (545 aa).

Residues 29-32 (TLGP), 86-90 (DGTTT), Gly413, 476-478 (NAA), and Asp492 contribute to the ATP site.

Belongs to the chaperonin (HSP60) family. In terms of assembly, forms a cylinder of 14 subunits composed of two heptameric rings stacked back-to-back. Interacts with the co-chaperonin GroES.

The protein resides in the cytoplasm. The catalysed reaction is ATP + H2O + a folded polypeptide = ADP + phosphate + an unfolded polypeptide.. Functionally, together with its co-chaperonin GroES, plays an essential role in assisting protein folding. The GroEL-GroES system forms a nano-cage that allows encapsulation of the non-native substrate proteins and provides a physical environment optimized to promote and accelerate protein folding. The polypeptide is Chaperonin GroEL (Shouchella clausii (strain KSM-K16) (Alkalihalobacillus clausii)).